The primary structure comprises 141 residues: uncharacterized protein (141 aa).

This is an uncharacterized protein from Sinorhizobium fredii (strain NBRC 101917 / NGR234).